Consider the following 414-residue polypeptide: Mu-like prophage FluMu F protein (414 aa).

The protein to phage Mu protein F.

Its function is as follows. Involved in virion morphogenesis. This chain is Mu-like prophage FluMu F protein, found in Haemophilus influenzae (strain ATCC 51907 / DSM 11121 / KW20 / Rd).